The primary structure comprises 760 residues: Golgin subfamily A member 5 (760 aa).

Residues 1–727 are Cytoplasmic-facing; it reads MSWFVDLAGK…IFLRRYPMAR (727 aa). A compositionally biased stretch (polar residues) spans 95–111; the sequence is VSSTTPLGSSSKASSNF. Disordered regions lie at residues 95–114, 126–216, and 432–456; these read VSST…FVRP, DFLN…SQAD, and TEEK…EYTK. Residues 135–146 show a composition bias toward basic and acidic residues; sequence QSEKKEVRRETV. Polar residues predominate over residues 148–166; that stretch reads KAFSPTGVSAQSQMPTVSL. Low complexity predominate over residues 174–201; sequence PSVTPTPSSTQGLSRNSSLGSLSSSSHS. Residues 249-668 are a coiled coil; sequence QGQEHVISNL…LQGGQNSASH (420 aa). Over residues 441–450 the composition is skewed to polar residues; that stretch reads LQQQAKSSRS. A helical; Anchor for type IV membrane protein membrane pass occupies residues 728–748; it reads VFVIIYMALLHLWVMIVLLTY. At 749-760 the chain is on the extracellular side; the sequence is TPEMHHSHPDGR.

It is found in the golgi apparatus membrane. In terms of biological role, involved in maintaining Golgi structure. Stimulates the formation of Golgi stacks and ribbons. Involved in intra-Golgi retrograde transport. In Danio rerio (Zebrafish), this protein is Golgin subfamily A member 5 (golga5).